The primary structure comprises 75 residues: Mating pheromone Er-10 (75 aa).

A signal peptide spans 1–19; the sequence is MNKLAILAIIAMVLFSANA. Residues 20-37 constitute a propeptide that is removed on maturation; that stretch reads FRFQSRIRSNVEAKTETR. Intrachain disulfides connect C40/C56, C47/C74, and C52/C64.

Homodimer.

Its subcellular location is the secreted. Mating ciliate pheromones (or gamones) are diffusible extracellular communication signals that distinguish different intraspecific classes of cells commonly referred to as 'mating types'. They prepare the latter for conjugation by changing their cell surface properties. In Euplotes raikovi, this protein is Mating pheromone Er-10 (MAT10).